Reading from the N-terminus, the 1722-residue chain is Lymphocyte antigen 75 (1722 aa).

Residues 1–27 (MGTRRVTPGCAAGLLVLLLRCFGLAEP) form the signal peptide. Residues 28–1666 (SEFSGDDSFT…VVCKVPLSPD (1639 aa)) are Extracellular-facing. The region spanning 32-182 (GDDSFTIVNE…FLVGETWHHD (151 aa)) is the Ricin B-type lectin domain. The N-linked (GlcNAc...) asparagine glycan is linked to N135. Positions 164–211 (SYGRPCEFPFLVGETWHHDCIRDENHSGPWCATTLNYEYDQKWGICLK) constitute a Fibronectin type-II domain. Intrachain disulfides connect C169–C194, C183–C209, C247–C340, and C317–C332. In terms of domain architecture, C-type lectin 1 spans 225–341 (QIGSCYQFNN…CEAQQPYVCK (117 aa)). 2 N-linked (GlcNAc...) asparagine glycosylation sites follow: N345 and N377. C-type lectin domains follow at residues 368–486 (QNGF…YVCK), 493–625 (NDTR…ICKK), and 652–791 (SNLS…WVCQ). Intrachain disulfides connect C389–C485 and C462–C477. An N-linked (GlcNAc...) asparagine glycan is attached at N529. 3 disulfide bridges follow: C597–C614, C678–C790, and C752–C782. Residues N843 and N865 are each glycosylated (N-linked (GlcNAc...) asparagine). Y933 is subject to Phosphotyrosine. N-linked (GlcNAc...) asparagine glycans are attached at residues N934 and N1076. 2 consecutive C-type lectin domains span residues 958–1091 (FQNK…LCQK) and 1110–1222 (YLNN…ICYY). 2 disulfide bridges follow: C1060/C1080 and C1197/C1211. N1225, N1320, and N1392 each carry an N-linked (GlcNAc...) asparagine glycan. The 124-residue stretch at 1251–1374 (FQNSCYNFMI…VIDETLHFYQ (124 aa)) folds into the C-type lectin 7 domain. C-type lectin domains follow at residues 1401–1513 (YEDG…ICYK) and 1542–1661 (YGDH…VCKV). C1488 and C1502 are disulfide-bonded. N-linked (GlcNAc...) asparagine glycans are attached at residues N1593 and N1626. C1635 and C1650 are joined by a disulfide. The helical transmembrane segment at 1667 to 1691 (YRGIAVLFAVLSVLALISGLIWFLV) threads the bilayer. The Cytoplasmic portion of the chain corresponds to 1692–1722 (QRNHFRWTGLSSVRYEHGANEDEVMLPSFHD). Phosphoserine occurs at positions 1703 and 1719.

Expressed in the thymus and cultured bone marrow cells.

Its subcellular location is the membrane. Functionally, acts as an endocytic receptor to direct captured antigens from the extracellular space to a specialized antigen-processing compartment. Causes reduced proliferation of B lymphocytes. The polypeptide is Lymphocyte antigen 75 (LY75) (Mesocricetus auratus (Golden hamster)).